Reading from the N-terminus, the 836-residue chain is DNA gyrase subunit A (836 aa).

In terms of domain architecture, Topo IIA-type catalytic spans 34–500; that stretch reads LPDARDGLKP…AGDVRDIEDI (467 aa). The active-site O-(5'-phospho-DNA)-tyrosine intermediate is the tyrosine 122. The short motif at 527–533 is the GyrA-box element; that stretch reads QKRGGQG.

Belongs to the type II topoisomerase GyrA/ParC subunit family. As to quaternary structure, heterotetramer, composed of two GyrA and two GyrB chains. In the heterotetramer, GyrA contains the active site tyrosine that forms a transient covalent intermediate with DNA, while GyrB binds cofactors and catalyzes ATP hydrolysis.

Its subcellular location is the cytoplasm. The enzyme catalyses ATP-dependent breakage, passage and rejoining of double-stranded DNA.. A type II topoisomerase that negatively supercoils closed circular double-stranded (ds) DNA in an ATP-dependent manner to modulate DNA topology and maintain chromosomes in an underwound state. Negative supercoiling favors strand separation, and DNA replication, transcription, recombination and repair, all of which involve strand separation. Also able to catalyze the interconversion of other topological isomers of dsDNA rings, including catenanes and knotted rings. Type II topoisomerases break and join 2 DNA strands simultaneously in an ATP-dependent manner. In Chlamydia trachomatis serovar D (strain ATCC VR-885 / DSM 19411 / UW-3/Cx), this protein is DNA gyrase subunit A.